A 344-amino-acid polypeptide reads, in one-letter code: Heat-inducible transcription repressor HrcA (344 aa).

The protein belongs to the HrcA family.

Its function is as follows. Negative regulator of class I heat shock genes (grpE-dnaK-dnaJ and groELS operons). Prevents heat-shock induction of these operons. This is Heat-inducible transcription repressor HrcA from Streptococcus pneumoniae (strain Taiwan19F-14).